A 372-amino-acid polypeptide reads, in one-letter code: Probable butyrate kinase (372 aa).

It belongs to the acetokinase family.

The protein resides in the cytoplasm. It catalyses the reaction butanoate + ATP = butanoyl phosphate + ADP. This chain is Probable butyrate kinase, found in Oleidesulfovibrio alaskensis (strain ATCC BAA-1058 / DSM 17464 / G20) (Desulfovibrio alaskensis).